The sequence spans 44 residues: Conotoxin S5.1 (44 aa).

In terms of processing, contains 3 disulfide bonds. In terms of tissue distribution, expressed by the venom duct.

Its subcellular location is the secreted. The chain is Conotoxin S5.1 from Conus striatus (Striated cone).